Reading from the N-terminus, the 432-residue chain is Adenylosuccinate synthetase (432 aa).

Residues 13 to 19 (GDEGKGK) and 41 to 43 (GHT) contribute to the GTP site. The active-site Proton acceptor is aspartate 14. Residues aspartate 14 and glycine 41 each coordinate Mg(2+). Residues 14–17 (DEGK), 39–42 (NAGH), threonine 130, arginine 144, glutamine 225, threonine 240, and arginine 304 contribute to the IMP site. The Proton donor role is filled by histidine 42. Substrate is bound at residue 300 to 306 (AVTGRPR). GTP is bound by residues arginine 306, 332-334 (KLD), and 415-417 (STG).

This sequence belongs to the adenylosuccinate synthetase family. Homodimer. It depends on Mg(2+) as a cofactor.

The protein resides in the cytoplasm. The catalysed reaction is IMP + L-aspartate + GTP = N(6)-(1,2-dicarboxyethyl)-AMP + GDP + phosphate + 2 H(+). It functions in the pathway purine metabolism; AMP biosynthesis via de novo pathway; AMP from IMP: step 1/2. Plays an important role in the de novo pathway of purine nucleotide biosynthesis. Catalyzes the first committed step in the biosynthesis of AMP from IMP. This is Adenylosuccinate synthetase from Histophilus somni (strain 129Pt) (Haemophilus somnus).